The following is a 246-amino-acid chain: MTTAENREGYKRVMLKLGGEMFGGGKVGIDPDVVQNVARQIAEVSKSGVEVAVVIGGGNFFRGAELQQRGLDRSRSDYMGMLGTVMNCLALQDFLEQEGVDCRVQTAIQMTQVAEPYLPLRASRHLEKGRVVIFGAGMGMPYFSTDTTAAQRALEIGCEVLLMAKAVDGVYSDDPRTNPEAELFHEITPREVIEKGLKVADATAFSLCMDNKMPILVFNLLTDGNIARAVAGERIGTLVDGNVSTR.

16–19 (KLGG) lines the ATP pocket. Gly57 provides a ligand contact to UMP. The ATP site is built by Gly58 and Arg62. UMP-binding positions include Asp77 and 138 to 145 (MGMPYFST). Residues Tyr171 and Asp174 each contribute to the ATP site.

The protein belongs to the UMP kinase family. In terms of assembly, homohexamer.

It localises to the cytoplasm. The enzyme catalyses UMP + ATP = UDP + ADP. Its pathway is pyrimidine metabolism; CTP biosynthesis via de novo pathway; UDP from UMP (UMPK route): step 1/1. With respect to regulation, inhibited by UTP. Its function is as follows. Catalyzes the reversible phosphorylation of UMP to UDP. The sequence is that of Uridylate kinase from Corynebacterium jeikeium (strain K411).